A 489-amino-acid chain; its full sequence is MASEGDPGVGSGDSDFVVVANRLPIDMERLPDGSTSFKRSPGGLVTALEPLLRKRHGAWIGWAGIPDSAEDPIEDDGLQLYPVSLSADDVADYYEGFSNATLWPLYHDLIVKPIYHRKWWDRYVEVNRRFAEATARAAAEGATVWVQDYQLQLVPKMLRMLRPDLTIGFFLHIPFPPVELFMQMPWRTEIIEGLLGADLVGFHLPGGAQNFLYLARRLTGANTSRATVGVRSRFGEVQVGFRTVKVGAFPISIDSDELDGKARNRAVRQRAREIRNELGNPRKILLGVDRLDYTKGINVRLEALSELLEDGRVDSHDTVFVQLATPSRERVQSYIEMREDIERQVGHINGEFGDVGHPIVHYLHRPIPRDELIAFFVAADVMLVTPLRDGMNLVAKEYVACRSDLGGALVLSEFTGAAAELRQAYLANPHHLEGVKDAIEAALNQDPEEGRRRMRALRRQVLAHDVDRWARAFLDALADTRAGAKPVRD.

Arg-22 is a binding site for D-glucose 6-phosphate. Residue 42–43 (GG) participates in UDP-alpha-D-glucose binding. Positions 94 and 148 each coordinate D-glucose 6-phosphate. Residues Arg-290 and Lys-295 each coordinate UDP-alpha-D-glucose. Arg-328 contributes to the D-glucose 6-phosphate binding site. 393-397 (LVAKE) contacts UDP-alpha-D-glucose.

The protein belongs to the glycosyltransferase 20 family. As to quaternary structure, homotetramer.

It catalyses the reaction ADP-alpha-D-glucose + D-glucose 6-phosphate = alpha,alpha-trehalose 6-phosphate + ADP + H(+). The enzyme catalyses CDP-alpha-D-glucose + D-glucose 6-phosphate = alpha,alpha-trehalose 6-phosphate + CDP + H(+). It carries out the reaction GDP-alpha-D-glucose + D-glucose 6-phosphate = alpha,alpha-trehalose 6-phosphate + GDP + H(+). The catalysed reaction is TDP-alpha-D-glucose + D-glucose 6-phosphate = 5-methyl-UDP + alpha,alpha-trehalose 6-phosphate + H(+). It catalyses the reaction D-glucose 6-phosphate + UDP-alpha-D-glucose = alpha,alpha-trehalose 6-phosphate + UDP + H(+). It participates in glycan biosynthesis; trehalose biosynthesis. Probably involved in the osmoprotection via the biosynthesis of trehalose and in the production of glycogen and alpha-glucan via the TreS-Pep2 branch involved in the biosynthesis of maltose-1-phosphate (M1P). Catalyzes the transfer of glucose from UDP-glucose (UDP-Glc) to D-glucose 6-phosphate (Glc-6-P) to form trehalose-6-phosphate. Probably also able to use ADP-Glc, CDP-Glc, GDP-Glc and TDP-Glc as glucosyl donors. The polypeptide is Trehalose-6-phosphate synthase (Mycobacterium sp. (strain KMS)).